The chain runs to 207 residues: ATP synthase subunit b 2 (207 aa).

Residues L58–P78 traverse the membrane as a helical segment.

This sequence belongs to the ATPase B chain family. In terms of assembly, F-type ATPases have 2 components, F(1) - the catalytic core - and F(0) - the membrane proton channel. F(1) has five subunits: alpha(3), beta(3), gamma(1), delta(1), epsilon(1). F(0) has three main subunits: a(1), b(2) and c(10-14). The alpha and beta chains form an alternating ring which encloses part of the gamma chain. F(1) is attached to F(0) by a central stalk formed by the gamma and epsilon chains, while a peripheral stalk is formed by the delta and b chains.

It localises to the cell inner membrane. Its function is as follows. F(1)F(0) ATP synthase produces ATP from ADP in the presence of a proton or sodium gradient. F-type ATPases consist of two structural domains, F(1) containing the extramembraneous catalytic core and F(0) containing the membrane proton channel, linked together by a central stalk and a peripheral stalk. During catalysis, ATP synthesis in the catalytic domain of F(1) is coupled via a rotary mechanism of the central stalk subunits to proton translocation. In terms of biological role, component of the F(0) channel, it forms part of the peripheral stalk, linking F(1) to F(0). The b'-subunit is a diverged and duplicated form of b found in plants and photosynthetic bacteria. In Rhizobium johnstonii (strain DSM 114642 / LMG 32736 / 3841) (Rhizobium leguminosarum bv. viciae), this protein is ATP synthase subunit b 2 (atpF2).